A 100-amino-acid polypeptide reads, in one-letter code: Putative pterin-4-alpha-carbinolamine dehydratase (100 aa).

It belongs to the pterin-4-alpha-carbinolamine dehydratase family.

The enzyme catalyses (4aS,6R)-4a-hydroxy-L-erythro-5,6,7,8-tetrahydrobiopterin = (6R)-L-erythro-6,7-dihydrobiopterin + H2O. The chain is Putative pterin-4-alpha-carbinolamine dehydratase from Allorhizobium ampelinum (strain ATCC BAA-846 / DSM 112012 / S4) (Agrobacterium vitis (strain S4)).